Reading from the N-terminus, the 130-residue chain is Small ribosomal subunit protein uS9 (130 aa).

Belongs to the universal ribosomal protein uS9 family.

This chain is Small ribosomal subunit protein uS9, found in Herminiimonas arsenicoxydans.